We begin with the raw amino-acid sequence, 522 residues long: Lysine--tRNA ligase (522 aa).

Positions 44–52 (PSGLPHIGT) match the 'HIGH' region motif. Positions 290–294 (KISKS) match the 'KMSKS' region motif. Residue Lys-293 participates in ATP binding.

Belongs to the class-I aminoacyl-tRNA synthetase family.

The protein resides in the cytoplasm. The enzyme catalyses tRNA(Lys) + L-lysine + ATP = L-lysyl-tRNA(Lys) + AMP + diphosphate. The chain is Lysine--tRNA ligase from Rickettsia peacockii (strain Rustic).